The chain runs to 601 residues: NADH-quinone oxidoreductase subunit C/D (601 aa).

Residues 1–191 (MKLTREFPSN…DPFMLDAVKQ (191 aa)) are NADH dehydrogenase I subunit C. The interval 215–601 (DYMFLNLGPN…IDFVMSDVDR (387 aa)) is NADH dehydrogenase I subunit D.

This sequence in the N-terminal section; belongs to the complex I 30 kDa subunit family. In the C-terminal section; belongs to the complex I 49 kDa subunit family. In terms of assembly, NDH-1 is composed of 13 different subunits. Subunits NuoB, CD, E, F, and G constitute the peripheral sector of the complex.

The protein resides in the cell inner membrane. It carries out the reaction a quinone + NADH + 5 H(+)(in) = a quinol + NAD(+) + 4 H(+)(out). In terms of biological role, NDH-1 shuttles electrons from NADH, via FMN and iron-sulfur (Fe-S) centers, to quinones in the respiratory chain. The immediate electron acceptor for the enzyme in this species is believed to be ubiquinone. Couples the redox reaction to proton translocation (for every two electrons transferred, four hydrogen ions are translocated across the cytoplasmic membrane), and thus conserves the redox energy in a proton gradient. In Aeromonas hydrophila subsp. hydrophila (strain ATCC 7966 / DSM 30187 / BCRC 13018 / CCUG 14551 / JCM 1027 / KCTC 2358 / NCIMB 9240 / NCTC 8049), this protein is NADH-quinone oxidoreductase subunit C/D.